The sequence spans 295 residues: Proline-rich protein 18 (295 aa).

Residues 1–13 (MPFPPMPPPPAPA) show a composition bias toward pro residues. The interval 1 to 133 (MPFPPMPPPP…GAGPCPDSAA (133 aa)) is disordered. Low complexity predominate over residues 14-29 (PGAQAARQLPRRPCAA). Residue serine 47 is modified to Phosphoserine. Omega-N-methylarginine is present on arginine 83. Positions 103–126 (ARTTYAATSAGTGTTAAGTSSGAG) are enriched in low complexity. An Asymmetric dimethylarginine modification is found at arginine 172. Residues 181–192 (ARAAGPRRGGPA) are compositionally biased toward low complexity. The segment at 181-227 (ARAAGPRRGGPASDPDAPPTAGQGRRAPPPGAQLLHGGLQVPQLSPR) is disordered. An Omega-N-methylarginine modification is found at arginine 188.

The protein is Proline-rich protein 18 (PRR18) of Homo sapiens (Human).